A 622-amino-acid chain; its full sequence is Chromosomal replication initiator protein DnaA (622 aa).

The domain I, interacts with DnaA modulators stretch occupies residues 1-99 (MADVPADLAA…SAGEPPAPPA (99 aa)). Positions 88–282 (DDSAGEPPAP…APGPGEPHAR (195 aa)) are disordered. Residues 100 to 281 (PPMHQSHQGP…PAPGPGEPHA (182 aa)) form a domain II region. Basic and acidic residues-rich tracts occupy residues 118 to 137 (QRDD…RPSD) and 176 to 210 (GYQD…EPWR). Gly residues predominate over residues 250–262 (PGGHGPGRTGGSV). A domain III, AAA+ region region spans residues 282–498 (RLNPKYLFDT…GALIRVTAFA (217 aa)). ATP-binding residues include Gly-326, Gly-328, Lys-329, and Thr-330. Positions 499-622 (SLNRQPVDLG…TELTNRIKNG (124 aa)) are domain IV, binds dsDNA.

The protein belongs to the DnaA family. As to quaternary structure, oligomerizes as a right-handed, spiral filament on DNA at oriC.

Its subcellular location is the cytoplasm. Functionally, plays an essential role in the initiation and regulation of chromosomal replication. ATP-DnaA binds to the origin of replication (oriC) to initiate formation of the DNA replication initiation complex once per cell cycle. Binds the DnaA box (a 9 base pair repeat at the origin) and separates the double-stranded (ds)DNA. Forms a right-handed helical filament on oriC DNA; dsDNA binds to the exterior of the filament while single-stranded (ss)DNA is stabiized in the filament's interior. The ATP-DnaA-oriC complex binds and stabilizes one strand of the AT-rich DNA unwinding element (DUE), permitting loading of DNA polymerase. After initiation quickly degrades to an ADP-DnaA complex that is not apt for DNA replication. Binds acidic phospholipids. The sequence is that of Chromosomal replication initiator protein DnaA from Streptomyces griseus subsp. griseus (strain JCM 4626 / CBS 651.72 / NBRC 13350 / KCC S-0626 / ISP 5235).